We begin with the raw amino-acid sequence, 1158 residues long: ATP-dependent helicase/deoxyribonuclease subunit B (1158 aa).

Positions 1–275 (MTLHAYLGRA…QYFNQLYRFN (275 aa)) constitute a UvrD-like helicase ATP-binding domain. Residue 8-15 (GRAGTGKS) coordinates ATP. In terms of domain architecture, UvrD-like helicase C-terminal spans 269-583 (NQLYRFNNQD…SIGTMDLAKV (315 aa)). [4Fe-4S] cluster is bound by residues Cys-784, Cys-1112, Cys-1115, and Cys-1121.

It belongs to the helicase family. AddB/RexB type 1 subfamily. In terms of assembly, heterodimer of AddA and AddB. It depends on Mg(2+) as a cofactor. [4Fe-4S] cluster is required as a cofactor.

Functionally, the heterodimer acts as both an ATP-dependent DNA helicase and an ATP-dependent, dual-direction single-stranded exonuclease. Recognizes the chi site generating a DNA molecule suitable for the initiation of homologous recombination. The AddB subunit has 5' -&gt; 3' nuclease activity but not helicase activity. The sequence is that of ATP-dependent helicase/deoxyribonuclease subunit B from Staphylococcus aureus (strain USA300).